The sequence spans 311 residues: Putative tenascin-XA (311 aa).

Disordered stretches follow at residues 1 to 47 (MEDK…EPRL) and 124 to 150 (LSAE…SQLS). 3 consecutive Fibronectin type-III domains span residues 41 to 135 (PPEE…LAPA), 145 to 249 (RLSQ…SPRD), and 250 to 311 (LQFS…SCVH).

Expressed in the adrenal gland.

The polypeptide is Putative tenascin-XA (TNXA) (Homo sapiens (Human)).